Here is a 275-residue protein sequence, read N- to C-terminus: Lectin (275 aa).

The signal sequence occupies residues 1-30 (MASLQTQMISFYAIFLSILLTTILFFKVNS). Mn(2+) is bound by residues glutamate 149 and aspartate 151. 4 residues coordinate Ca(2+): aspartate 151, phenylalanine 153, asparagine 155, and aspartate 159. The Mn(2+) site is built by aspartate 159 and histidine 166. A glycan (N-linked (GlcNAc...) asparagine) is linked at asparagine 217.

This sequence belongs to the leguminous lectin family. Tetramer of two alpha and two beta chains.

In terms of biological role, D-mannose specific lectin. The polypeptide is Lectin (LECA) (Pisum sativum (Garden pea)).